The sequence spans 276 residues: Arginine and glutamate-rich protein 1 (276 aa).

2 stretches are compositionally biased toward basic residues: residues 1–30 and 38–59; these read MGRS…RSRS and ARKR…RSRS. Residues 1-77 are necessary and sufficient for RNA binding; that stretch reads MGRSRSRSSS…RRDRERERER (77 aa). A disordered region spans residues 1 to 117; sequence MGRSRSRSSS…EKKAEFERQR (117 aa). Composition is skewed to basic and acidic residues over residues 67 to 87 and 96 to 117; these read SRRD…RIDI and SSLD…ERQR. Residues 78–276 form a necessary and sufficient for transcriptional regulation region; that stretch reads ASSPPDRIDI…KLSFSLKSQD (199 aa). The LXXLL motif 1; degenerate signature appears at 175 to 179; sequence LLEEL. Residues 204-208 carry the LXXLL motif 2; degenerate motif; it reads LERIL. Positions 240 to 256 are enriched in basic and acidic residues; that stretch reads RMKLEQERQRQQKEEQK. The segment at 240–276 is disordered; it reads RMKLEQERQRQQKEEQKIILGKGKSRPKLSFSLKSQD.

This sequence belongs to the ARGLU1 family.

The protein localises to the nucleus. It is found in the nucleus speckle. Its subcellular location is the chromosome. Functionally, dual function regulator of gene expression; regulator of transcription and modulator of alternative splicing. General coactivator of nuclear receptor-induced gene expression. The polypeptide is Arginine and glutamate-rich protein 1 (ARGLU1) (Gallus gallus (Chicken)).